Here is a 390-residue protein sequence, read N- to C-terminus: Elongation factor Tu 2 (390 aa).

The 192-residue stretch at 10-201 (KPHVNVGTIG…LDEYVAVPPR (192 aa)) folds into the tr-type G domain. The interval 19–26 (GHVDHGKT) is G1. Position 19–26 (19–26 (GHVDHGKT)) interacts with GTP. Residue T26 participates in Mg(2+) binding. Residues 55 to 59 (GITIA) are G2. Residues 76–79 (DCPG) form a G3 region. Residues 76-80 (DCPGH) and 131-134 (NKAD) each bind GTP. Positions 131 to 134 (NKAD) are G4. A G5 region spans residues 168-170 (SAL).

This sequence belongs to the TRAFAC class translation factor GTPase superfamily. Classic translation factor GTPase family. EF-Tu/EF-1A subfamily. In terms of assembly, monomer.

It localises to the cytoplasm. It carries out the reaction GTP + H2O = GDP + phosphate + H(+). GTP hydrolase that promotes the GTP-dependent binding of aminoacyl-tRNA to the A-site of ribosomes during protein biosynthesis. The chain is Elongation factor Tu 2 from Wolbachia pipientis wMel.